Consider the following 328-residue polypeptide: Malate dehydrogenase (328 aa).

Residue 11–17 (GAAGQIG) coordinates NAD(+). Positions 94 and 100 each coordinate substrate. Residues asparagine 107, glutamine 114, and 131–133 (VGN) contribute to the NAD(+) site. Substrate is bound by residues asparagine 133 and arginine 164. Histidine 189 acts as the Proton acceptor in catalysis.

Belongs to the LDH/MDH superfamily. MDH type 2 family.

The catalysed reaction is (S)-malate + NAD(+) = oxaloacetate + NADH + H(+). Functionally, catalyzes the reversible oxidation of malate to oxaloacetate. This is Malate dehydrogenase from Xylella fastidiosa (strain M23).